The following is a 131-amino-acid chain: Calvin cycle protein CP12-2, chloroplastic (131 aa).

The transit peptide at 1–53 (MATIATGLNIATQRVFVTSENRPVCLAGPVHLNNSWNLGSRTTNRMMKLQPIK) directs the protein to the chloroplast. Disulfide bonds link C75-C84 and C117-C126. The disordered stretch occupies residues 97–131 (AASHARDKKKADGSDPLEEYCKDNPETNECRTYDN). The segment covering 105 to 131 (KKADGSDPLEEYCKDNPETNECRTYDN) has biased composition (basic and acidic residues).

The protein belongs to the CP12 family. As to quaternary structure, monomer. Component of a complex that contains two dimers of PRK, two tetramers of GAPDH and CP12. CP12 associates with GAPDH, causing its conformation to change. This GAPDH/CP12 complex binds PRK to form a half-complex (one unit). This unit probably dimerizes due partially to interactions between the enzymes of each unit. In terms of processing, contains two disulfide bonds; only the oxidized protein, with two disulfide bonds, is active in complex formation. The C-terminal disulfide is involved in the interaction with GAPDH and the N-terminal disulfide mediates the binding of PRK with this binary complex. In terms of tissue distribution, mostly expressed in cotyledons, leaves and flower stalks, and, to a lower extent, in flowers and stems. Barely detectable in roots and siliques.

It is found in the plastid. It localises to the chloroplast. Its function is as follows. Acts as a linker essential in the assembly of a core complex of PRK/GAPDH. Coordinates the reversible inactivation of chloroplast enzymes GAPDH and PRK during darkness in photosynthetic tissues. The protein is Calvin cycle protein CP12-2, chloroplastic (CP12-2) of Arabidopsis thaliana (Mouse-ear cress).